Consider the following 179-residue polypeptide: Repressor of phase 1 flagellin gene (179 aa).

In terms of biological role, transcriptional repressor of the FliC phase-1 flagellin. This is Repressor of phase 1 flagellin gene (fljA) from Salmonella abortus-equi.